The sequence spans 246 residues: 1-(5-phosphoribosyl)-5-[(5-phosphoribosylamino)methylideneamino] imidazole-4-carboxamide isomerase (246 aa).

The active-site Proton acceptor is the aspartate 8. Aspartate 131 serves as the catalytic Proton donor.

The protein belongs to the HisA/HisF family.

It localises to the cytoplasm. The catalysed reaction is 1-(5-phospho-beta-D-ribosyl)-5-[(5-phospho-beta-D-ribosylamino)methylideneamino]imidazole-4-carboxamide = 5-[(5-phospho-1-deoxy-D-ribulos-1-ylimino)methylamino]-1-(5-phospho-beta-D-ribosyl)imidazole-4-carboxamide. It functions in the pathway amino-acid biosynthesis; L-histidine biosynthesis; L-histidine from 5-phospho-alpha-D-ribose 1-diphosphate: step 4/9. In Chromobacterium violaceum (strain ATCC 12472 / DSM 30191 / JCM 1249 / CCUG 213 / NBRC 12614 / NCIMB 9131 / NCTC 9757 / MK), this protein is 1-(5-phosphoribosyl)-5-[(5-phosphoribosylamino)methylideneamino] imidazole-4-carboxamide isomerase.